A 341-amino-acid chain; its full sequence is GDP-mannose transporter GONST5 (341 aa).

8 helical membrane passes run 17–37 (LSIL…KWIF), 44–64 (FPLS…YIVI), 89–109 (FVFC…PVSF), 141–161 (LVPI…FNVF), 192–212 (INTV…PAFL), 233–253 (IILF…FYVI), 260–280 (TFNV…WMIF), and 284–304 (ISPM…FYGY). The EamA domain occupies 33-152 (NKWIFQKLDF…PIVGGILLTS (120 aa)).

Belongs to the TPT transporter family. TPT (TC 2.A.7.9) subfamily. As to expression, expressed in rosette leaves, flowers and siliques.

The protein localises to the golgi apparatus membrane. GDP-mannose transporter that may be involved in the import of GDP-mannose from the cytoplasm into the Golgi lumen. The sequence is that of GDP-mannose transporter GONST5 (GONST5) from Arabidopsis thaliana (Mouse-ear cress).